Reading from the N-terminus, the 65-residue chain is Large ribosomal subunit protein bL33c (65 aa).

Belongs to the bacterial ribosomal protein bL33 family.

It localises to the plastid. The protein resides in the chloroplast. This is Large ribosomal subunit protein bL33c (rpl33) from Porphyra purpurea (Red seaweed).